A 1108-amino-acid chain; its full sequence is Activity-dependent neuroprotector homeobox protein (1108 aa).

Residues 1–685 (MFQLPVNNLG…ASTITLHLVH (685 aa)) form a binds to beta-catenin/CTNNB1 region. Residues Lys39 and Lys72 each participate in a glycyl lysine isopeptide (Lys-Gly) (interchain with G-Cter in SUMO2) cross-link. The C2H2-type 1; degenerate zinc-finger motif lies at 74–97 (FCCSACPFSSKFFSAYKSHFRNVH). Ser98 is modified (phosphoserine). The C2H2-type 2; degenerate zinc finger occupies 107–129 (LNCPYCTFNADKKTLETHIKIFH). The interval 133–154 (SSAPSSSLSTFKDKNKNDGLKP) is disordered. Positions 143–154 (FKDKNKNDGLKP) are enriched in basic and acidic residues. Glycyl lysine isopeptide (Lys-Gly) (interchain with G-Cter in SUMO2) cross-links involve residues Lys144 and Lys155. The C2H2-type 3; degenerate zinc finger occupies 165–188 (YYCKKCTYRDPLYEIVRKHIYREH). Residues Lys203, Lys231, Lys266, Lys274, Lys278, Lys279, Lys311, and Lys335 each participate in a glycyl lysine isopeptide (Lys-Gly) (interchain with G-Cter in SUMO2) cross-link. The segment at 221-244 (IHCKRCLFMPKSYEALVQHVIEDH) adopts a C2H2-type 4; degenerate zinc-finger fold. Arg348 bears the Asymmetric dimethylarginine mark. The tract at residues 354–361 (NAPVSIPQ) is neuroprotective peptide; contributes to CTNNB1-binding, but less effective than whole N-terminal region. The tract at residues 360–438 (PQQSQSVKQL…PAATGPPPSN (79 aa)) is disordered. Residues Lys367 and Lys407 each participate in a glycyl lysine isopeptide (Lys-Gly) (interchain with G-Cter in SUMO2) cross-link. Polar residues predominate over residues 393–422 (SLQTANTSLPPGQVKSPSVSQSQASRVLGQ). A phosphoserine mark is found at Ser408 and Ser412. Lys426 participates in a covalent cross-link: Glycyl lysine isopeptide (Lys-Gly) (interchain with G-Cter in SUMO2). The span at 426-437 (KPPPAATGPPPS) shows a compositional bias: pro residues. The segment at 446 to 468 (KICTICNELFPENVYSVHFEKEH) adopts a C2H2-type 5; atypical zinc-finger fold. C2H2-type zinc fingers lie at residues 488 to 509 (SKCL…MLIH) and 511 to 534 (LSCP…RMVH). Glycyl lysine isopeptide (Lys-Gly) (interchain with G-Cter in SUMO2) cross-links involve residues Lys599 and Lys605. Residue Ser607 is modified to Phosphoserine. Residues Lys615, Lys620, Lys631, and Lys657 each participate in a glycyl lysine isopeptide (Lys-Gly) (interchain with G-Cter in SUMO2) cross-link. The segment at 621–646 (TLCPLCFSILKGPISDALAHHLRERH) adopts a C2H2-type 8; atypical zinc-finger fold. Residues 661–685 (YKCIHCLGVYTSNMTASTITLHLVH) form a C2H2-type 9; atypical zinc finger. Residues 690 to 711 (GKTQNGQDKTNAPSRLNQSPGL) form a disordered region. Residues 691–709 (KTQNGQDKTNAPSRLNQSP) are compositionally biased toward polar residues. Lys698 is covalently cross-linked (Glycyl lysine isopeptide (Lys-Gly) (interchain with G-Cter in SUMO2)). Ser708 is subject to Phosphoserine. Residues Lys715, Lys727, and Lys730 each participate in a glycyl lysine isopeptide (Lys-Gly) (interchain with G-Cter in SUMO2) cross-link. Phosphoserine is present on Ser737. Residue Lys744 forms a Glycyl lysine isopeptide (Lys-Gly) (interchain with G-Cter in SUMO2) linkage. The segment at residues 753–813 (LDPKGHEDDS…SNKRKKCVRD (61 aa)) is a DNA-binding region (homeobox). Ser804 is subject to Phosphoserine. Residues Lys806, Lys828, and Lys834 each participate in a glycyl lysine isopeptide (Lys-Gly) (interchain with G-Cter in SUMO2) cross-link. The segment covering 851–880 (KDSRVNASKTVDKKHNLGKEDDSFSDSFEH) has biased composition (basic and acidic residues). The segment at 851 to 1037 (KDSRVNASKT…DTEQLKWKNS (187 aa)) is disordered. Ser875, Ser877, Ser885, Ser888, and Ser904 each carry phosphoserine. Residues Lys913, Lys928, and Lys941 each participate in a glycyl lysine isopeptide (Lys-Gly) (interchain with G-Cter in SUMO2) cross-link. Residues 928-938 (KEEEEEEEEED) are compositionally biased toward acidic residues. Residues 939–959 (GSKYETIHLTEEPAKLMHDAS) show a composition bias toward basic and acidic residues. Residues Ser959 and Ser961 each carry the phosphoserine modification. The span at 977–988 (PSESGPGSQQIS) shows a compositional bias: polar residues. Residue Lys1022 forms a Glycyl lysine isopeptide (Lys-Gly) (interchain with G-Cter in SUMO2) linkage. N6-acetyllysine; alternate is present on residues Lys1041 and Lys1048. Residues Lys1041 and Lys1048 each participate in a glycyl lysine isopeptide (Lys-Gly) (interchain with G-Cter in SUMO2); alternate cross-link. Residues 1050–1108 (QSQWENASENAERLPNPQIEWQNSTIDSEDGEQFDSMTDGVADPMHGSLTGVKLSSQQA) are disordered. Phosphoserine is present on Ser1077.

Interacts (via N-terminal region) with beta-catenin/CTNNB1 (via the central armadillo domains); interaction is direct and stabilizes CTNNB1 by modulating its phosphorylation by glycogen synthase kinase-3 beta GSK3B. In terms of tissue distribution, expressed in the brain, with a higher expression in cerebellum and hippocampus. Weakly expressed in lung, kidney and intestine, and expressed at intermediate level in testis.

The protein resides in the nucleus. The protein localises to the chromosome. May be involved in transcriptional regulation. May mediate some of the neuroprotective peptide VIP-associated effects involving normal growth and cancer proliferation. Positively modulates WNT-beta-catenin/CTNN1B signaling, acting by regulating phosphorylation of, and thereby stabilizing, CTNNB1. May be required for neural induction and neuronal differentiation. May be involved in erythroid differentiation. This chain is Activity-dependent neuroprotector homeobox protein (Adnp), found in Mus musculus (Mouse).